The primary structure comprises 282 residues: Elongation factor Ts (282 aa).

The tract at residues Thr-80–Val-83 is involved in Mg(2+) ion dislocation from EF-Tu.

The protein belongs to the EF-Ts family.

It localises to the cytoplasm. Associates with the EF-Tu.GDP complex and induces the exchange of GDP to GTP. It remains bound to the aminoacyl-tRNA.EF-Tu.GTP complex up to the GTP hydrolysis stage on the ribosome. The sequence is that of Elongation factor Ts (tsf) from Chlamydia muridarum (strain MoPn / Nigg).